The sequence spans 358 residues: MSFNSFGRVLRFTTWGESHGPALGAVVDGCPPRLSLSEADIQPFLDKRRPGQSRHTTQRQEPDQVRILSGVFEGKTTGTPISLMIENVDQRSKDYGEIAQAWRPGHADYAYDAKYGIRDYRGGGRSSARETAARVAAGAVARLVIPEVQIHAWVAEIGGDAIDPANFDLEEIDRNPFFCPDPAAAQRWEALMDSARKAGSSLGAVIECAASGVPAGWGAPVYAKLDSDLAAAMMGINAVKGVEIGAGFGVARLRGEENADPMRPASDGSNRPDFLSNNAGGIAGGISTGQPVVVRVAFKPTSSILTPVPTVNKAGEATDIVTRGRHDPCVGIRGAPVVEAMMALTLADHKLLHRAQCG.

Positions 39–61 are disordered; that stretch reads ADIQPFLDKRRPGQSRHTTQRQE. NADP(+)-binding residues include Arg48 and Arg54. Residues 125–127, 237–238, Gly284, 299–303, and Arg325 each bind FMN; these read RSS, NA, and KPTSS.

Belongs to the chorismate synthase family. Homotetramer. Requires FMNH2 as cofactor.

It carries out the reaction 5-O-(1-carboxyvinyl)-3-phosphoshikimate = chorismate + phosphate. It functions in the pathway metabolic intermediate biosynthesis; chorismate biosynthesis; chorismate from D-erythrose 4-phosphate and phosphoenolpyruvate: step 7/7. Functionally, catalyzes the anti-1,4-elimination of the C-3 phosphate and the C-6 proR hydrogen from 5-enolpyruvylshikimate-3-phosphate (EPSP) to yield chorismate, which is the branch point compound that serves as the starting substrate for the three terminal pathways of aromatic amino acid biosynthesis. This reaction introduces a second double bond into the aromatic ring system. The sequence is that of Chorismate synthase from Sphingopyxis alaskensis (strain DSM 13593 / LMG 18877 / RB2256) (Sphingomonas alaskensis).